A 486-amino-acid chain; its full sequence is LON peptidase N-terminal domain and RING finger protein C14F5.10c (486 aa).

The RING-type zinc-finger motif lies at 169 to 207; that stretch reads CQICFGMLYDPVVSPCGHTFCGPCLMQALTQSPQCPTCR. In terms of domain architecture, Lon N-terminal spans 250-472; the sequence is ESWLPLFISM…LVLIWLTQLQ (223 aa).

This is LON peptidase N-terminal domain and RING finger protein C14F5.10c from Schizosaccharomyces pombe (strain 972 / ATCC 24843) (Fission yeast).